Reading from the N-terminus, the 151-residue chain is MSSSPGRIDADLAGGFGHDLVTLTELQFRQVEGALTAAGLDEAVLLGFNRLRLGVVEQAAALGQLIEEGARQQADLEAMHRLLRDAPVPILSIDATLGLHYSNEAARRFLGESFEQNGGAALRRSLTRPQIGRLSAALARAGDPAGRRRRI.

This is an uncharacterized protein from Rhodobacter capsulatus (Rhodopseudomonas capsulata).